Here is a 643-residue protein sequence, read N- to C-terminus: Versicolorin B synthase (643 aa).

Residues 1 to 41 (MGRNWFQVTAMAVVPVVGIMAAVNPTILSSAASSLPSLGAM) constitute a propeptide that is removed on maturation. Residues 84–85 (TA) and 105–106 (EA) contribute to the FAD site. The N-linked (GlcNAc...) asparagine glycan is linked to asparagine 116. Residue 171 to 174 (GAML) participates in FAD binding. Asparagine 221 and asparagine 507 each carry an N-linked (GlcNAc...) asparagine glycan. Residues alanine 613 and 624 to 625 (PM) contribute to the FAD site.

This sequence belongs to the GMC oxidoreductase family. Homodimer. FAD is required as a cofactor. N-glycosylated.

Its subcellular location is the cytoplasm. It localises to the cytosol. The enzyme catalyses (2S-3S)-versiconal hemiacetal = versicolorin B + H2O. It catalyses the reaction (S)-5'-oxoaverantin + H(+) = (1'S,5'S)-averufin + H2O. The protein operates within mycotoxin biosynthesis; aflatoxin biosynthesis. Its function is as follows. Dual cyclase; part of the gene cluster that mediates the biosynthesis of aflatoxins, a group of polyketide-derived furanocoumarins, and part of the most toxic and carcinogenic compounds among the known mycotoxins. The four major aflatoxins produced by A.parasiticus are aflatoxin B1 (AFB1), aflatoxin B2 (AFB2), aflatoxin G1 (AFG1) and aflatoxin G2 (AFG2). Aflk plays a dual role within the aflatoxin pathway, as a 5'-oxoaverantin cyclase that mediates conversion of 5'-oxoaverantin (OAVN) to averufin (AVF), as well as a versicolorin B synthase that converts versiconal (VAL) to versicolorin B (VERB) by closing the bisfuran ring of aflatoxin which is required for DNA-binding, thus giving to aflatoxin its activity as a mutagen. The biosynthesis of aflatoxins begins with the norsolorinic acid synthase aflC that combines a hexanoyl starter unit produced by the fatty acid synthase aflA/aflB and 7 malonyl-CoA extender units to synthesize the precursor NOR. The second step is the conversion of NOR to averantin and requires the norsolorinic acid ketoreductase aflD, which catalyzes the dehydration of norsolorinic acid to form (1'S)-averantin. The norsolorinic acid reductases aflE and aflF may also play a role in the conversion of NOR to AVN. The cytochrome P450 monooxygenase aflG then catalyzes the hydroxylation of AVN to 5'hydroxyaverantin (HAVN). The next step is performed by the 5'-hydroxyaverantin dehydrogenase aflH that transforms HAVN to 5'-oxoaverantin (OAVN) which is further converted to averufin (AVF) by aflK that plays a dual role in the pathway, as a 5'-oxoaverantin cyclase that mediates conversion of 5'-oxoaverantin, as well as a versicolorin B synthase in a later step in the pathway. The averufin oxidase aflI catalyzes the conversion of AVF to versiconal hemiacetal acetate (VHA). VHA is then the substrate for the versiconal hemiacetal acetate esterase aflJ to yield versiconal (VAL). Versicolorin B synthase aflK then converts VAL to versicolorin B (VERB) by closing the bisfuran ring of aflatoxin which is required for DNA-binding, thus giving to aflatoxin its activity as a mutagen. Then, the activity of the versicolorin B desaturase aflL leads to versicolorin A (VERA). A branch point starts from VERB since it can also be converted to dihydrodemethylsterigmatocystin (DMDHST), probably also by aflL, VERA being a precursor for aflatoxins B1 and G1, and DMDHST for aflatoxins B2 and G2. Next, the versicolorin reductase aflM and the cytochrome P450 monooxygenase aflN are involved in conversion of VERA to demethylsterigmatocystin (DMST). AflX and aflY seem also involved in this step, through probable aflX-mediated epoxide ring-opening step following versicolorin A oxidation and aflY-mediated Baeyer-Villiger oxidation required for the formation of the xanthone ring. The methyltransferase aflO then leads to the modification of DMST to sterigmatocystin (ST), and of DMDHST to dihydrosterigmatocystin (DHST). Both ST and DHST are then substrates of the O-methyltransferase aflP to yield O-methylsterigmatocystin (OMST) and dihydro-O-methylsterigmatocystin (DHOMST), respectively. Finally OMST is converted to aflatoxins B1 and G1, and DHOMST to aflatoxins B2 and G2, via the action of several enzymes including O-methylsterigmatocystin oxidoreductase aflQ, the cytochrome P450 monooxygenase aflU, but also the NADH-dependent flavin oxidoreductase nadA which is specifically required for the synthesis of AFG1. This chain is Versicolorin B synthase, found in Aspergillus parasiticus (strain ATCC 56775 / NRRL 5862 / SRRC 143 / SU-1).